We begin with the raw amino-acid sequence, 265 residues long: uncharacterized protein (265 aa).

Disordered stretches follow at residues 162 to 183 (VTKKNASNSNGNEGTLTVNNDQ) and 196 to 239 (AKTN…DKEI). 2 stretches are compositionally biased toward polar residues: residues 165-183 (KNASNSNGNEGTLTVNNDQ) and 213-233 (QSTSLIQLKEGSANTTEGNAS).

It belongs to the MG185/MG260 family.

This is an uncharacterized protein from Mycoplasma pneumoniae (strain ATCC 29342 / M129 / Subtype 1) (Mycoplasmoides pneumoniae).